The primary structure comprises 380 residues: Cytochrome b (380 aa).

4 helical membrane passes run 34–54 (FGSLLTICLLTQILTGLLLAM), 78–99 (WLIRNLHANGASFFFICIYLHI), 114–134 (WNTGVILLLTLMATAFVGYVL), and 179–199 (FFALHFLLPFMIVGLSMIHLT). Histidine 84 and histidine 98 together coordinate heme b. Residues histidine 183 and histidine 197 each coordinate heme b. An a ubiquinone-binding site is contributed by histidine 202. 4 helical membrane-spanning segments follow: residues 227–247 (LKDILGFILMLLPLTTLALFS), 289–309 (LGGVLALAASVLILFLAPFLH), 321–341 (ISQLLFWILVANLLILTWVGS), and 348–368 (FIIIGQLASITYFTILLILFP).

This sequence belongs to the cytochrome b family. As to quaternary structure, the cytochrome bc1 complex contains 11 subunits: 3 respiratory subunits (MT-CYB, CYC1 and UQCRFS1), 2 core proteins (UQCRC1 and UQCRC2) and 6 low-molecular weight proteins (UQCRH/QCR6, UQCRB/QCR7, UQCRQ/QCR8, UQCR10/QCR9, UQCR11/QCR10 and a cleavage product of UQCRFS1). This cytochrome bc1 complex then forms a dimer. Heme b is required as a cofactor.

It localises to the mitochondrion inner membrane. Functionally, component of the ubiquinol-cytochrome c reductase complex (complex III or cytochrome b-c1 complex) that is part of the mitochondrial respiratory chain. The b-c1 complex mediates electron transfer from ubiquinol to cytochrome c. Contributes to the generation of a proton gradient across the mitochondrial membrane that is then used for ATP synthesis. This Pelecanoides garnotii (Peruvian diving petrel) protein is Cytochrome b (MT-CYB).